The following is a 602-amino-acid chain: Prostaglandin G/H synthase 1 (602 aa).

Residues 1 to 26 form the signal peptide; that stretch reads MSRRSLSLWFPLLLLLLLPPTPSVLL. In terms of domain architecture, EGF-like spans 34–72; it reads PVNPCCYYPCQNQGVCVRFGLDNYQCDCTRTGYSGPNCT. Intrachain disulfides connect Cys-38–Cys-49, Cys-39–Cys-161, Cys-43–Cys-59, and Cys-61–Cys-71. Asn-70, Asn-106, and Asn-146 each carry an N-linked (GlcNAc...) asparagine glycan. The active-site Proton acceptor is the His-209. Tyr-387 acts as the For cyclooxygenase activity in catalysis. His-390 provides a ligand contact to heme b. The cysteines at positions 571 and 577 are disulfide-linked.

The protein belongs to the prostaglandin G/H synthase family. In terms of assembly, homodimer. It depends on heme b as a cofactor.

The protein localises to the microsome membrane. The protein resides in the endoplasmic reticulum membrane. It catalyses the reaction (5Z,8Z,11Z,14Z)-eicosatetraenoate + AH2 + 2 O2 = prostaglandin H2 + A + H2O. It carries out the reaction (5Z,8Z,11Z,14Z)-eicosatetraenoate + 2 O2 = prostaglandin G2. The catalysed reaction is prostaglandin G2 + AH2 = prostaglandin H2 + A + H2O. The enzyme catalyses (9Z,12Z)-octadecadienoate + AH2 + O2 = (9R)-hydroxy-(10E,12Z)-octadecadienoate + A + H2O. It catalyses the reaction (9Z,12Z)-octadecadienoate + AH2 + O2 = (9S)-hydroxy-(10E,12Z)-octadecadienoate + A + H2O. It carries out the reaction (9Z,12Z)-octadecadienoate + AH2 + O2 = (13S)-hydroxy-(9Z,11E)-octadecadienoate + A + H2O. The catalysed reaction is (9Z,12Z)-octadecadienoate + AH2 + O2 = (13R)-hydroxy-(9Z,11E)-octadecadienoate + A + H2O. Its pathway is lipid metabolism; prostaglandin biosynthesis. Its activity is regulated as follows. The cyclooxygenase activity is inhibited by nonsteroidal anti-inflammatory drugs (NSAIDs) including ibuprofen, flurbiprofen, ketoprofen, naproxen, flurbiprofen, anirolac, fenclofenac and diclofenac. Dual cyclooxygenase and peroxidase that plays an important role in the biosynthesis pathway of prostanoids, a class of C20 oxylipins mainly derived from arachidonate ((5Z,8Z,11Z,14Z)-eicosatetraenoate, AA, C20:4(n-6)), with a particular role in the inflammatory response. The cyclooxygenase activity oxygenates AA to the hydroperoxy endoperoxide prostaglandin G2 (PGG2), and the peroxidase activity reduces PGG2 to the hydroxy endoperoxide prostaglandin H2 (PGH2), the precursor of all 2-series prostaglandins and thromboxanes. This complex transformation is initiated by abstraction of hydrogen at carbon 13 (with S-stereochemistry), followed by insertion of molecular O2 to form the endoperoxide bridge between carbon 9 and 11 that defines prostaglandins. The insertion of a second molecule of O2 (bis-oxygenase activity) yields a hydroperoxy group in PGG2 that is then reduced to PGH2 by two electrons. Involved in the constitutive production of prostanoids in particular in the stomach and platelets. In gastric epithelial cells, it is a key step in the generation of prostaglandins, such as prostaglandin E2 (PGE2), which plays an important role in cytoprotection. In platelets, it is involved in the generation of thromboxane A2 (TXA2), which promotes platelet activation and aggregation, vasoconstriction and proliferation of vascular smooth muscle cells. Can also use linoleate (LA, (9Z,12Z)-octadecadienoate, C18:2(n-6)) as substrate and produce hydroxyoctadecadienoates (HODEs) in a regio- and stereospecific manner, being (9R)-HODE ((9R)-hydroxy-(10E,12Z)-octadecadienoate) and (13S)-HODE ((13S)-hydroxy-(9Z,11E)-octadecadienoate) its major products. The chain is Prostaglandin G/H synthase 1 from Mus musculus (Mouse).